The chain runs to 279 residues: Large ribosomal subunit protein uL2 (279 aa).

Residues 224 to 279 are disordered; the sequence is AMNPIDHPHGGGEGRTSGGRHPVTPWGKGTKGNRTRKSKASDKLIVRSRHAKKKGR. The span at 269 to 279 shows a compositional bias: basic residues; it reads VRSRHAKKKGR.

The protein belongs to the universal ribosomal protein uL2 family. As to quaternary structure, part of the 50S ribosomal subunit. Forms a bridge to the 30S subunit in the 70S ribosome.

In terms of biological role, one of the primary rRNA binding proteins. Required for association of the 30S and 50S subunits to form the 70S ribosome, for tRNA binding and peptide bond formation. It has been suggested to have peptidyltransferase activity; this is somewhat controversial. Makes several contacts with the 16S rRNA in the 70S ribosome. This Cereibacter sphaeroides (strain ATCC 17029 / ATH 2.4.9) (Rhodobacter sphaeroides) protein is Large ribosomal subunit protein uL2.